The primary structure comprises 468 residues: Glutamate--tRNA ligase (468 aa).

The short motif at 8 to 18 (PSPTGFLHVGG) is the 'HIGH' region element. Zn(2+) contacts are provided by Cys-97, Cys-99, Cys-124, and Asp-126. Positions 236–240 (KLSKR) match the 'KMSKS' region motif. Lys-239 is an ATP binding site.

It belongs to the class-I aminoacyl-tRNA synthetase family. Glutamate--tRNA ligase type 1 subfamily. Monomer. Requires Zn(2+) as cofactor.

The protein resides in the cytoplasm. The enzyme catalyses tRNA(Glu) + L-glutamate + ATP = L-glutamyl-tRNA(Glu) + AMP + diphosphate. Its function is as follows. Catalyzes the attachment of glutamate to tRNA(Glu) in a two-step reaction: glutamate is first activated by ATP to form Glu-AMP and then transferred to the acceptor end of tRNA(Glu). This is Glutamate--tRNA ligase from Francisella tularensis subsp. holarctica (strain FTNF002-00 / FTA).